The primary structure comprises 290 residues: Protein-lysine methyltransferase METTL21E (290 aa).

Residues Trp-96, 124–126 (GAG), Asp-145, Trp-176, and Ala-197 each bind S-adenosyl-L-methionine.

Belongs to the methyltransferase superfamily. METTL21 family.

Its function is as follows. Protein-lysine methyltransferase. The polypeptide is Protein-lysine methyltransferase METTL21E (METTL21E) (Bos taurus (Bovine)).